Reading from the N-terminus, the 216-residue chain is Kynurenine formamidase (216 aa).

Phe21 is a binding site for substrate. 3 residues coordinate Zn(2+): His51, His55, and Asp57. The Proton donor/acceptor role is filled by His61. Residues His167 and Glu179 each coordinate Zn(2+).

It belongs to the Cyclase 1 superfamily. KynB family. As to quaternary structure, homodimer. Zn(2+) serves as cofactor.

The enzyme catalyses N-formyl-L-kynurenine + H2O = L-kynurenine + formate + H(+). It participates in amino-acid degradation; L-tryptophan degradation via kynurenine pathway; L-kynurenine from L-tryptophan: step 2/2. In terms of biological role, catalyzes the hydrolysis of N-formyl-L-kynurenine to L-kynurenine, the second step in the kynurenine pathway of tryptophan degradation. This is Kynurenine formamidase from Paracidovorax citrulli (strain AAC00-1) (Acidovorax citrulli).